Here is a 227-residue protein sequence, read N- to C-terminus: ATP phosphoribosyltransferase (227 aa).

It belongs to the ATP phosphoribosyltransferase family. Short subfamily. In terms of assembly, heteromultimer composed of HisG and HisZ subunits.

The protein localises to the cytoplasm. The enzyme catalyses 1-(5-phospho-beta-D-ribosyl)-ATP + diphosphate = 5-phospho-alpha-D-ribose 1-diphosphate + ATP. It functions in the pathway amino-acid biosynthesis; L-histidine biosynthesis; L-histidine from 5-phospho-alpha-D-ribose 1-diphosphate: step 1/9. Catalyzes the condensation of ATP and 5-phosphoribose 1-diphosphate to form N'-(5'-phosphoribosyl)-ATP (PR-ATP). Has a crucial role in the pathway because the rate of histidine biosynthesis seems to be controlled primarily by regulation of HisG enzymatic activity. This is ATP phosphoribosyltransferase from Rhodospirillum rubrum (strain ATCC 11170 / ATH 1.1.1 / DSM 467 / LMG 4362 / NCIMB 8255 / S1).